The primary structure comprises 374 residues: DNA integrity scanning protein DisA (374 aa).

The DAC domain occupies 20 to 158 (DGLMRASLSA…DGMRRVLEDS (139 aa)). ATP contacts are provided by residues G87, L105, and 118–122 (TRHRT).

This sequence belongs to the DisA family. In terms of assembly, homooctamer. The cofactor is Mg(2+).

It catalyses the reaction 2 ATP = 3',3'-c-di-AMP + 2 diphosphate. Participates in a DNA-damage check-point that is active prior to asymmetric division when DNA is damaged. DisA forms globular foci that rapidly scan along the chromosomes during sporulation, searching for lesions. When a lesion is present, DisA pauses at the lesion site. This triggers a cellular response that culminates in a temporary block in sporulation initiation. In terms of biological role, also has diadenylate cyclase activity, catalyzing the condensation of 2 ATP molecules into cyclic di-AMP (c-di-AMP). c-di-AMP acts as a signaling molecule that couples DNA integrity with progression of sporulation. The rise in c-di-AMP level generated by DisA while scanning the chromosome, operates as a positive signal that advances sporulation; upon encountering a lesion, the DisA focus arrests at the damaged site and halts c-di-AMP synthesis. This Streptomyces avermitilis (strain ATCC 31267 / DSM 46492 / JCM 5070 / NBRC 14893 / NCIMB 12804 / NRRL 8165 / MA-4680) protein is DNA integrity scanning protein DisA.